We begin with the raw amino-acid sequence, 298 residues long: 3-deoxy-manno-octulosonate cytidylyltransferase (298 aa).

The helical transmembrane segment at 22 to 42 threads the bilayer; sequence VWVLHGLALGAAAAAAAVAYL.

This sequence belongs to the KdsB family. It depends on Mg(2+) as a cofactor. Ubiquitous.

The protein localises to the membrane. The catalysed reaction is 3-deoxy-alpha-D-manno-oct-2-ulosonate + CTP = CMP-3-deoxy-beta-D-manno-octulosonate + diphosphate. Its pathway is nucleotide-sugar biosynthesis; CMP-3-deoxy-D-manno-octulosonate biosynthesis; CMP-3-deoxy-D-manno-octulosonate from 3-deoxy-D-manno-octulosonate and CTP: step 1/1. Its function is as follows. Catalyzes the production of the sugar nucleotide CMP-3-deoxy-D-manno-octulosonate (CMP-KDO). CTP is the preferred nucleotide donor, and it can partially be replaced with UTP but not with ATP. Activates KDO during the biosynthesis of rhamnogalacturonan II (RG-II), a structurally complex pectic polysaccharide of the primary cell wall. RG-II is essential for the cell wall integrity of rapidly growing tissues and pollen tube growth and elongation. This is 3-deoxy-manno-octulosonate cytidylyltransferase from Zea mays (Maize).